The primary structure comprises 449 residues: MLVNKVIGLLGVLFATRFTNAVELDLDNYESLQNATSLIAYGLMDYYTGNQYGKTVGMFSDPYYWWEAGGAWGCMLDYWFFMDNDTYNDEIIAAMIHQAGDDNDYIPLNQSTTEGNDDQAFWGIAAMTAAERNFTNPPENEPQWLYLAQAVFNTMALRWDADSCGGGLRWQIFVWNSGYDYKNTVSNGALFHIAARLARYTGNQTYVDWAEKVYEWMVGVNLISNGTYKYVYDGVSIDDNCTKVTSYQWTYNQGLLLAGSAYLYNFTGSDLWHTRTKEFLNASQVFFHDGIVYEAACQGPNSCNTDQRSFKAYFARFLGVTAQLVPETRNQIMSWLNTSAIAAAKSCSGGTDGHTCGLNWFNGTWDGMYGLGEQMSALEVMVNTRALDKPAPYTAENGGSSVGDGAAGTQAQPTNLAPLNITKGSKAGAGIITAVIGISIVACALWLVF.

Residues 1-21 form the signal peptide; the sequence is MLVNKVIGLLGVLFATRFTNA. N-linked (GlcNAc...) asparagine glycosylation is found at asparagine 34, asparagine 84, asparagine 109, asparagine 133, asparagine 203, asparagine 225, asparagine 240, asparagine 265, asparagine 281, asparagine 337, asparagine 362, and asparagine 420. Glycine 428 carries the GPI-anchor amidated glycine lipid modification. A propeptide spans 429–449 (removed in mature form); it reads AGIITAVIGISIVACALWLVF.

It belongs to the glycosyl hydrolase 76 family.

It localises to the cell membrane. It carries out the reaction Random hydrolysis of (1-&gt;6)-alpha-D-mannosidic linkages in unbranched (1-&gt;6)-mannans.. In terms of biological role, required for normal synthesis of the cell wall. The sequence is that of Mannan endo-1,6-alpha-mannosidase DCW1 (DCW1) from Saccharomyces cerevisiae (strain ATCC 204508 / S288c) (Baker's yeast).